A 156-amino-acid polypeptide reads, in one-letter code: Cyanate hydratase (156 aa).

Residues Arg-96, Glu-99, and Ser-122 contribute to the active site.

It belongs to the cyanase family. As to quaternary structure, homodecamer composed of five homodimers.

The catalysed reaction is cyanate + hydrogencarbonate + 3 H(+) = NH4(+) + 2 CO2. Functionally, catalyzes the reaction of cyanate with bicarbonate to produce ammonia and carbon dioxide. This is Cyanate hydratase (cynS) from Escherichia coli O157:H7.